A 165-amino-acid chain; its full sequence is Destrin (165 aa).

Ala-2 is modified (N-acetylalanine). Ser-3 is modified (phosphoserine). One can recognise an ADF-H domain in the interval 4–153 (GVQVADEVCR…NRACIAEKLG (150 aa)). The residue at position 19 (Lys-19) is an N6-acetyllysine. The Nuclear localization signal motif lies at 30–34 (KKRKK).

This sequence belongs to the actin-binding proteins ADF family. In terms of processing, ISGylated.

In terms of biological role, actin-depolymerizing protein. Severs actin filaments (F-actin) and binds to actin monomers (G-actin). Acts in a pH-independent manner. The chain is Destrin (DSTN) from Bos taurus (Bovine).